Reading from the N-terminus, the 278-residue chain is UPF0276 protein Ssed_2857 (278 aa).

This sequence belongs to the UPF0276 family.

This chain is UPF0276 protein Ssed_2857, found in Shewanella sediminis (strain HAW-EB3).